The following is a 203-amino-acid chain: Glycerol-3-phosphate acyltransferase 1 (203 aa).

6 helical membrane-spanning segments follow: residues 2–22 (LNFFLITIQFLSGAVMYSHII), 52–72 (GFPALMLDYFKGTFPIAFFVW), 82–102 (VIAFAALSGILGHAFSPFLKF), 117–137 (VLTKWEGPMVLGTVFTIFSIL), 150–168 (EDAFRVMIGFAALLIYTMW), and 170–190 (VFNGMPELAILYFGNFLIVFY).

It belongs to the PlsY family. Probably interacts with PlsX.

Its subcellular location is the cell inner membrane. The enzyme catalyses an acyl phosphate + sn-glycerol 3-phosphate = a 1-acyl-sn-glycero-3-phosphate + phosphate. Its pathway is lipid metabolism; phospholipid metabolism. Functionally, catalyzes the transfer of an acyl group from acyl-phosphate (acyl-PO(4)) to glycerol-3-phosphate (G3P) to form lysophosphatidic acid (LPA). This enzyme utilizes acyl-phosphate as fatty acyl donor, but not acyl-CoA or acyl-ACP. This Thermotoga maritima (strain ATCC 43589 / DSM 3109 / JCM 10099 / NBRC 100826 / MSB8) protein is Glycerol-3-phosphate acyltransferase 1.